The following is a 781-amino-acid chain: Transcription factor Sp3 (781 aa).

Over residues 1-12 the composition is skewed to basic and acidic residues; it reads MTAPEKPVKQEE. Disordered stretches follow at residues 1–53 and 65–88; these read MTAP…AAQD and TCSK…AGAP. Residues 20–31 are compositionally biased toward gly residues; the sequence is SGGGGGGGGGHG. Over residues 32-53 the composition is skewed to low complexity; the sequence is EYLQQQQQHGNGAVAAAAAAQD. Ser73 is subject to Phosphoserine. A Glycyl lysine isopeptide (Lys-Gly) (interchain with G-Cter in SUMO) cross-link involves residue Lys120. Positions 138–237 are transactivation domain (Gln-rich); it reads QYVLPLQNLQ…IPQTGQVQVQ (100 aa). Residues 301–338 form a disordered region; that stretch reads QAMDSSDNSERTGERVSPDINETNTDTDLFVPTSSSSQ. A compositionally biased stretch (basic and acidic residues) spans 308–317; the sequence is NSERTGERVS. A compositionally biased stretch (polar residues) spans 320-338; that stretch reads INETNTDTDLFVPTSSSSQ. The segment at 350 to 499 is transactivation domain (Gln-rich); it reads QQNTNSLTTS…TPVQTLTLGQ (150 aa). The 9aaTAD signature appears at 461–469; sequence VTWQTFQVQ. The repressor domain stretch occupies residues 534-620; sequence IQLHPGENAD…RGTNLGKKKQ (87 aa). The residue at position 551 (Lys551) is an N6-acetyllysine; alternate. A Glycyl lysine isopeptide (Lys-Gly) (interchain with G-Cter in SUMO); alternate cross-link involves residue Lys551. Lys551 is covalently cross-linked (Glycyl lysine isopeptide (Lys-Gly) (interchain with G-Cter in SUMO1); alternate). Residue Lys551 forms a Glycyl lysine isopeptide (Lys-Gly) (interchain with G-Cter in SUMO2); alternate linkage. 2 positions are modified to phosphoserine: Ser563 and Ser566. Lys593 participates in a covalent cross-link: Glycyl lysine isopeptide (Lys-Gly) (interchain with G-Cter in SUMO2). A C2H2-type 1 zinc finger spans residues 621-645; it reads HICHIPGCGKVYGKTSHLRAHLRWH. At Ser646 the chain carries Phosphoserine. 2 consecutive C2H2-type zinc fingers follow at residues 651-675 and 681-703; these read FVCN…RRTH and FVCP…IKTH.

Belongs to the Sp1 C2H2-type zinc-finger protein family. As to quaternary structure, interacts with HLTF; the interaction may be required for basal transcriptional activity of HLTF. Interacts with HDAC1; the interaction deacetylates SP3 and regulates its transcriptional activity. Interacts with HDAC2 (preferably the CK2-phosphorylated form); the interaction deacetylates SP3 and regulates its transcriptional activity. Interacts with MEIS2 isoform 4 and PBX1 isoform PBX1a. Not glycosylated. In terms of processing, acetylated by histone acetyltransferase p300, deacetylated by HDACs. Acetylation/deacetylation states regulate transcriptional activity. Acetylation appears to activate transcription. Alternate sumoylation and acetylation at Lys-551 also control transcriptional activity. Ceramides can also regulate acetylation/deacetylation events through altering the interaction of HDAC with SP3. In vitro, C(18)-ceramides, but not C(16)-ceramides, increase the interaction of HDAC1 with SP3 and enhance the deacetylation of SP3 and the subsequent repression of the TERT promoter. Post-translationally, sumoylated on all isoforms. Sumoylated on 2 sites in longer isoforms with Lys-551 being the major site. Sumoylation at this site promotes nuclear localization to the nuclear periphery, nuclear dots and PML nuclear bodies. Sumoylation on Lys-551 represses the transactivation activity, except for the largest isoform, L-Sp3, which has little effect on transactivation. Alternate sumoylation and acetylation at Lys-551 also control transcriptional activity. In terms of tissue distribution, ubiquitously expressed.

It is found in the nucleus. It localises to the PML body. Its function is as follows. Transcriptional factor that can act as an activator or repressor depending on isoform and/or post-translational modifications. Binds to GT and GC boxes promoter elements. Competes with SP1 for the GC-box promoters. Weak activator of transcription but can activate a number of genes involved in different processes such as cell-cycle regulation, hormone-induction and house-keeping. This is Transcription factor Sp3 (SP3) from Homo sapiens (Human).